A 370-amino-acid chain; its full sequence is Queuine tRNA-ribosyltransferase (370 aa).

Aspartate 89 acts as the Proton acceptor in catalysis. Substrate contacts are provided by residues 89-93, aspartate 143, glutamine 185, and glycine 212; that span reads DSGGF. An RNA binding region spans residues 243-249; that stretch reads GVGKPED. Aspartate 262 serves as the catalytic Nucleophile. The RNA binding; important for wobble base 34 recognition stretch occupies residues 267–271; the sequence is TRNAR. Cysteine 300, cysteine 302, cysteine 305, and histidine 331 together coordinate Zn(2+).

It belongs to the queuine tRNA-ribosyltransferase family. In terms of assembly, homodimer. Within each dimer, one monomer is responsible for RNA recognition and catalysis, while the other monomer binds to the replacement base PreQ1. Zn(2+) is required as a cofactor.

The catalysed reaction is 7-aminomethyl-7-carbaguanine + guanosine(34) in tRNA = 7-aminomethyl-7-carbaguanosine(34) in tRNA + guanine. The protein operates within tRNA modification; tRNA-queuosine biosynthesis. Its function is as follows. Catalyzes the base-exchange of a guanine (G) residue with the queuine precursor 7-aminomethyl-7-deazaguanine (PreQ1) at position 34 (anticodon wobble position) in tRNAs with GU(N) anticodons (tRNA-Asp, -Asn, -His and -Tyr). Catalysis occurs through a double-displacement mechanism. The nucleophile active site attacks the C1' of nucleotide 34 to detach the guanine base from the RNA, forming a covalent enzyme-RNA intermediate. The proton acceptor active site deprotonates the incoming PreQ1, allowing a nucleophilic attack on the C1' of the ribose to form the product. After dissociation, two additional enzymatic reactions on the tRNA convert PreQ1 to queuine (Q), resulting in the hypermodified nucleoside queuosine (7-(((4,5-cis-dihydroxy-2-cyclopenten-1-yl)amino)methyl)-7-deazaguanosine). The sequence is that of Queuine tRNA-ribosyltransferase from Pseudoalteromonas atlantica (strain T6c / ATCC BAA-1087).